Consider the following 37-residue polypeptide: Large ribosomal subunit protein bL36A (37 aa).

Belongs to the bacterial ribosomal protein bL36 family.

In Leifsonia xyli subsp. xyli (strain CTCB07), this protein is Large ribosomal subunit protein bL36A.